The chain runs to 85 residues: Platelet factor 4 (85 aa).

2 cysteine pairs are disulfide-bonded: Cys-25-Cys-51 and Cys-27-Cys-67. Ser-41 carries the post-translational modification Phosphoserine. 76–82 (KKIIKRL) contributes to the heparin binding site.

Belongs to the intercrine alpha (chemokine CxC) family. In terms of assembly, homotetramer. Interacts with TNFAIP6 (via Link domain). Interacts with CCR1. Interacts with CXCR3. Interacts with THBD; this interaction enhances generation of activated protein C.

Its subcellular location is the secreted. In terms of biological role, chemokine released during platelet aggregation that plays a role in different biological processes including hematopoiesis, cell proliferation, differentiation, and activation. Acts via different functional receptors including CCR1, CXCR3A or CXCR3B. Upon interaction with CXCR3A receptor, induces activated T-lymphocytes migration mediated via downstream Ras/extracellular signal-regulated kinase (ERK) signaling. Neutralizes the anticoagulant effect of heparin by binding more strongly to heparin than to the chondroitin-4-sulfate chains of the carrier molecule. Plays a role in the inhibition of hematopoiesis and in the maintenance of hematopoietic stem cell (HSC) quiescence. Chemotactic for neutrophils and monocytes via CCR1. Inhibits endothelial cell proliferation. In cooperation with toll-like receptor 8/TLR8, induces chromatin remodeling and activates inflammatory gene expression via the TBK1-IRF5 axis. In addition, induces myofibroblast differentiation and collagen synthesis in different precursor cells, including endothelial cells, by stimulating endothelial-to-mesenchymal transition. Interacts with thrombomodulin/THBD to enhance the activation of protein C and thus potentiates its anticoagulant activity. This Ovis aries (Sheep) protein is Platelet factor 4 (PF4).